The chain runs to 390 residues: 1-deoxy-D-xylulose 5-phosphate reductoisomerase (390 aa).

7 residues coordinate NADPH: Thr10, Gly11, Ser12, Ile13, Gly36, Asn38, and Asn124. Lys125 is a binding site for 1-deoxy-D-xylulose 5-phosphate. Glu126 contacts NADPH. Asp150 provides a ligand contact to Mn(2+). Residues Ser151, Glu152, Ser176, and His199 each contribute to the 1-deoxy-D-xylulose 5-phosphate site. Glu152 serves as a coordination point for Mn(2+). Residue Gly205 participates in NADPH binding. Ser212, Asn217, Lys218, and Glu221 together coordinate 1-deoxy-D-xylulose 5-phosphate. Glu221 serves as a coordination point for Mn(2+).

Belongs to the DXR family. Mg(2+) is required as a cofactor. It depends on Mn(2+) as a cofactor.

The enzyme catalyses 2-C-methyl-D-erythritol 4-phosphate + NADP(+) = 1-deoxy-D-xylulose 5-phosphate + NADPH + H(+). The protein operates within isoprenoid biosynthesis; isopentenyl diphosphate biosynthesis via DXP pathway; isopentenyl diphosphate from 1-deoxy-D-xylulose 5-phosphate: step 1/6. In terms of biological role, catalyzes the NADPH-dependent rearrangement and reduction of 1-deoxy-D-xylulose-5-phosphate (DXP) to 2-C-methyl-D-erythritol 4-phosphate (MEP). This chain is 1-deoxy-D-xylulose 5-phosphate reductoisomerase, found in Microcystis aeruginosa (strain NIES-843 / IAM M-2473).